We begin with the raw amino-acid sequence, 209 residues long: Large ribosomal subunit protein uL3 (209 aa).

The tract at residues 126–148 is disordered; it reads HGQSRGPMAHGSRYHRRPGSMGP.

The protein belongs to the universal ribosomal protein uL3 family. As to quaternary structure, part of the 50S ribosomal subunit. Forms a cluster with proteins L14 and L19.

One of the primary rRNA binding proteins, it binds directly near the 3'-end of the 23S rRNA, where it nucleates assembly of the 50S subunit. The polypeptide is Large ribosomal subunit protein uL3 (Listeria innocua serovar 6a (strain ATCC BAA-680 / CLIP 11262)).